The chain runs to 347 residues: GMP reductase (347 aa).

An NADP(+)-binding site is contributed by 108–131 (ADFEKTKQILDLNPALNFVCIDVA). Residues Gly181 and Gly183 each coordinate K(+). Cys186 serves as the catalytic Thioimidate intermediate. 216–239 (IVSDGGCTTPGDVAKAFGGGADFV) serves as a coordination point for NADP(+).

This sequence belongs to the IMPDH/GMPR family. GuaC type 1 subfamily. In terms of assembly, homotetramer.

It catalyses the reaction IMP + NH4(+) + NADP(+) = GMP + NADPH + 2 H(+). Its function is as follows. Catalyzes the irreversible NADPH-dependent deamination of GMP to IMP. It functions in the conversion of nucleobase, nucleoside and nucleotide derivatives of G to A nucleotides, and in maintaining the intracellular balance of A and G nucleotides. The polypeptide is GMP reductase (Shigella flexneri).